The following is a 215-amino-acid chain: Penicillin-binding protein activator LpoB (215 aa).

The signal sequence occupies residues 1–19; it reads MMKMCRYALITALAIFLAG. Residue Cys-20 is the site of N-palmitoyl cysteine attachment. Cys-20 carries S-diacylglycerol cysteine lipidation. A disordered region spans residues 28–78; it reads APVEEAKPQPQQPAQPQPTVPTVPAVPSVPAQPGPIEHQDQQSGQPAPRVR. Residues 37-48 show a composition bias toward pro residues; sequence PQQPAQPQPTVP. Residues 49–58 show a composition bias toward low complexity; that stretch reads TVPAVPSVPA.

Belongs to the LpoB family. As to quaternary structure, interacts with PBP1b.

It is found in the cell outer membrane. Functionally, regulator of peptidoglycan synthesis that is essential for the function of penicillin-binding protein 1B (PBP1b). This chain is Penicillin-binding protein activator LpoB, found in Klebsiella pneumoniae subsp. pneumoniae (strain ATCC 700721 / MGH 78578).